Here is a 138-residue protein sequence, read N- to C-terminus: uncharacterized protein (138 aa).

Positions 89–138 (DDYEDDFEDSDFQDGDFDDFEDEDGFDDDDDFEDDDFEYEDEDNDLDFDE) are disordered.

This is an uncharacterized protein from Treponema pallidum (strain Nichols).